Reading from the N-terminus, the 556-residue chain is Urocanate hydratase (556 aa).

NAD(+) contacts are provided by residues 52-53, Gln130, 176-178, Glu196, Arg201, 242-243, 263-267, 273-274, and Tyr322; these read GG, GMG, NA, QTSAH, and YL. Cys410 is a catalytic residue. Gly492 is an NAD(+) binding site.

This sequence belongs to the urocanase family. NAD(+) is required as a cofactor.

The protein resides in the cytoplasm. The enzyme catalyses 4-imidazolone-5-propanoate = trans-urocanate + H2O. The protein operates within amino-acid degradation; L-histidine degradation into L-glutamate; N-formimidoyl-L-glutamate from L-histidine: step 2/3. Functionally, catalyzes the conversion of urocanate to 4-imidazolone-5-propionate. The protein is Urocanate hydratase of Shewanella woodyi (strain ATCC 51908 / MS32).